Here is a 127-residue protein sequence, read N- to C-terminus: Cystatin cpi-1 (127 aa).

Residues 1-19 form the signal peptide; it reads MFFPIVWLSVLLIISKSFA. The short motif at 68–72 is the Secondary area of contact element; the sequence is QVVAG. A disulfide bond links Cys-86 and Cys-98.

Belongs to the cystatin family.

Cysteine protease inhibitor which inhibits members of the peptidase C1 family. Does not inhibit asparaginyl endopeptidase. This chain is Cystatin cpi-1, found in Brugia malayi (Filarial nematode worm).